Reading from the N-terminus, the 86-residue chain is UPF0297 protein STH1998 (86 aa).

It belongs to the UPF0297 family.

This Symbiobacterium thermophilum (strain DSM 24528 / JCM 14929 / IAM 14863 / T) protein is UPF0297 protein STH1998.